The primary structure comprises 103 residues: Large ribosomal subunit protein bL21 (103 aa).

This sequence belongs to the bacterial ribosomal protein bL21 family. In terms of assembly, part of the 50S ribosomal subunit. Contacts protein L20.

Its function is as follows. This protein binds to 23S rRNA in the presence of protein L20. This is Large ribosomal subunit protein bL21 from Paraburkholderia phymatum (strain DSM 17167 / CIP 108236 / LMG 21445 / STM815) (Burkholderia phymatum).